Reading from the N-terminus, the 103-residue chain is AQADATANEVAERIGYITRVQSFCASHRLHSPTLVMNITNIKEHIEEVIPLDHKNLDKDVPYFANVNVAVYIXDNMVKQLPANLLYEVKIHETDKNIVVYRGE.

Alanine 1 bears the N-acetylalanine mark. Histidine 27 contributes to the Zn(2+) binding site. Active-site charge relay system residues include histidine 53 and glutamate 92.

It belongs to the PTPS family. Homohexamer formed of two homotrimers in a head to head fashion. Zn(2+) is required as a cofactor.

The enzyme catalyses 7,8-dihydroneopterin 3'-triphosphate = 6-pyruvoyl-5,6,7,8-tetrahydropterin + triphosphate + H(+). Its pathway is cofactor biosynthesis; tetrahydrobiopterin biosynthesis; tetrahydrobiopterin from 7,8-dihydroneopterin triphosphate: step 1/3. Involved in the biosynthesis of tetrahydrobiopterin, an essential cofactor of aromatic amino acid hydroxylases. Catalyzes the transformation of 7,8-dihydroneopterin triphosphate into 6-pyruvoyl tetrahydropterin. The chain is 6-pyruvoyl tetrahydrobiopterin synthase (pts) from Salmo salar (Atlantic salmon).